Here is a 241-residue protein sequence, read N- to C-terminus: uncharacterized protein (241 aa).

This is an uncharacterized protein from Pasteurella multocida (strain Pm70).